We begin with the raw amino-acid sequence, 316 residues long: Tyrosine--tRNA ligase 2 (316 aa).

Tyr26, Tyr146, Gln150, Asp153, and Gln168 together coordinate L-tyrosine. The 'KMSKS' region motif lies at 219 to 223; the sequence is KMSKS. ATP is bound at residue Lys222.

Belongs to the class-I aminoacyl-tRNA synthetase family. TyrS type 4 subfamily. As to quaternary structure, homodimer.

It localises to the cytoplasm. The catalysed reaction is tRNA(Tyr) + L-tyrosine + ATP = L-tyrosyl-tRNA(Tyr) + AMP + diphosphate + H(+). Functionally, catalyzes the attachment of tyrosine to tRNA(Tyr) in a two-step reaction: tyrosine is first activated by ATP to form Tyr-AMP and then transferred to the acceptor end of tRNA(Tyr). The sequence is that of Tyrosine--tRNA ligase 2 from Pyrobaculum aerophilum (strain ATCC 51768 / DSM 7523 / JCM 9630 / CIP 104966 / NBRC 100827 / IM2).